The primary structure comprises 168 residues: SPbeta prophage-derived uncharacterized protein YonX (168 aa).

Residues 1–53 are a coiled coil; that stretch reads MNAQLFNLESRLDELENEINTQYCELDTNLDALKSNRIELESQLEKFESSLTN.

The polypeptide is SPbeta prophage-derived uncharacterized protein YonX (yonX) (Bacillus subtilis (strain 168)).